We begin with the raw amino-acid sequence, 120 residues long: Peptidyl-tRNA hydrolase (120 aa).

It belongs to the PTH2 family.

It localises to the cytoplasm. It catalyses the reaction an N-acyl-L-alpha-aminoacyl-tRNA + H2O = an N-acyl-L-amino acid + a tRNA + H(+). The natural substrate for this enzyme may be peptidyl-tRNAs which drop off the ribosome during protein synthesis. This chain is Peptidyl-tRNA hydrolase, found in Sulfolobus acidocaldarius (strain ATCC 33909 / DSM 639 / JCM 8929 / NBRC 15157 / NCIMB 11770).